Consider the following 487-residue polypeptide: Cobyric acid synthase (487 aa).

One can recognise a GATase cobBQ-type domain in the interval 251-439 (KLKVVAPAYP…CHGVLDHPEA (189 aa)). Catalysis depends on Cys332, which acts as the Nucleophile. His431 is an active-site residue.

Belongs to the CobB/CobQ family. CobQ subfamily.

It functions in the pathway cofactor biosynthesis; adenosylcobalamin biosynthesis. Functionally, catalyzes amidations at positions B, D, E, and G on adenosylcobyrinic A,C-diamide. NH(2) groups are provided by glutamine, and one molecule of ATP is hydrogenolyzed for each amidation. This chain is Cobyric acid synthase, found in Dechloromonas aromatica (strain RCB).